The primary structure comprises 72 residues: Variant surface glycoprotein MITAT 1.1000BC (72 aa).

Residue D50 is the site of GPI-anchor amidated aspartate attachment. A propeptide spans 51 to 72 (GSFLVNKKFALMVYDFVSLLAF) (removed in mature form).

The protein localises to the cell membrane. Functionally, VSG forms a coat on the surface of the parasite. The trypanosome evades the immune response of the host by expressing a series of antigenically distinct VSGs from an estimated 1000 VSG genes. The protein is Variant surface glycoprotein MITAT 1.1000BC of Trypanosoma brucei brucei.